Reading from the N-terminus, the 469-residue chain is Ufm1-specific protease 2 (469 aa).

An N-acetylmethionine modification is found at methionine 1. Active-site residues include cysteine 302, aspartate 426, and histidine 428.

Belongs to the peptidase C78 family. In terms of tissue distribution, expressed in brain.

It localises to the endoplasmic reticulum. Its subcellular location is the cytoplasm. The protein resides in the nucleus. Functionally, thiol-dependent isopeptidase that specifically cleaves UFM1, a ubiquitin-like modifier protein, from conjugated proteins, such as CD274/PD-L1, CYB5R3, DDRGK1, MRE11, RPL26/uL24, TRIP4 and RPL26/uL24. While it is also able to mediate the processing of UFM1 precursors, a prerequisite for conjugation reactions, UFSP2 mainly acts as a protein deUFMylase that mediates deconjugation of UFM1 from target proteins. Mediates deUFMylation of RPL26/uL24, a critical step to release the UFM1 ribosome E3 ligase (UREL) complex during the recycling of 60S ribosome subunits from the endoplasmic reticulum. Catalyzes deUFMylation of TRIP4, regulating intracellular nuclear receptors transactivation and thereby regulate cell proliferation and differentiation. This chain is Ufm1-specific protease 2, found in Homo sapiens (Human).